A 274-amino-acid polypeptide reads, in one-letter code: MPTVNSVRRAGNTDEETDPVTMLTAYDAPTASVVDDAGVDMILVGDSVGNAKLGYDTTLPVSVDEIASATGAVARATADAVVVADMPFLSFGADETESVRNAGRMLKEEDADAVKLESGPHTVSLTETLTSLGIPVMAHLGLTPQHVNQLGGYFRQGTDQDSAERMLDLARDHEAAGAFALVLEHVPANVAADITDAIDIPTIGIGAGPDTDGQVLVISDVIGMSERSPPFSKQFGDVNREMAAAVDDYVDAVESGSFPAAEHSHVADDVDDVY.

Mg(2+) contacts are provided by Asp-46 and Asp-85. Residues Asp-46 to Ser-47, Asp-85, and Lys-115 contribute to the 3-methyl-2-oxobutanoate site. Residue Glu-117 coordinates Mg(2+). Glu-184 acts as the Proton acceptor in catalysis.

It belongs to the PanB family. As to quaternary structure, homodecamer; pentamer of dimers. It depends on Mg(2+) as a cofactor.

The protein resides in the cytoplasm. The catalysed reaction is 3-methyl-2-oxobutanoate + (6R)-5,10-methylene-5,6,7,8-tetrahydrofolate + H2O = 2-dehydropantoate + (6S)-5,6,7,8-tetrahydrofolate. Its pathway is cofactor biosynthesis; coenzyme A biosynthesis. Catalyzes the reversible reaction in which hydroxymethyl group from 5,10-methylenetetrahydrofolate is transferred onto alpha-ketoisovalerate to form ketopantoate. The protein is 3-methyl-2-oxobutanoate hydroxymethyltransferase of Halobacterium salinarum (strain ATCC 29341 / DSM 671 / R1).